The primary structure comprises 324 residues: uncharacterized protein (324 aa).

This is an uncharacterized protein from Homo sapiens (Human).